The chain runs to 785 residues: Leucyl aminopeptidase (785 aa).

Substrate-binding positions include Glu-106 and 238–242 (GAMEN). His-273 provides a ligand contact to Zn(2+). Glu-274 functions as the Proton acceptor in the catalytic mechanism. Residues His-277 and Glu-296 each coordinate Zn(2+).

Belongs to the peptidase M1 family. In terms of assembly, co-immunoprecipitates with the 60 kDa chaperonin. It depends on Zn(2+) as a cofactor. In terms of processing, can be phosphorylated by cell extracts.

The protein resides in the cytoplasm. The catalysed reaction is Release of an N-terminal amino acid, Xaa-|-Yaa-, in which Xaa is preferably Leu, but may be other amino acids including Pro although not Arg or Lys, and Yaa may be Pro. Amino acid amides and methyl esters are also readily hydrolyzed, but rates on arylamides are exceedingly low.. Functionally, preferentially acts as a leucyl-aminopeptidase, although it also has activity against other substrates. The sequence is that of Leucyl aminopeptidase (ape2) from Saccharolobus solfataricus (strain ATCC 35092 / DSM 1617 / JCM 11322 / P2) (Sulfolobus solfataricus).